A 333-amino-acid chain; its full sequence is DNA-directed RNA polymerase subunit alpha (333 aa).

Residues 1 to 234 (MQSSVNEFLT…QQLAAFVDLK (234 aa)) form an alpha N-terminal domain (alpha-NTD) region. Positions 248–333 (IDPILLRPVD…SLKKDDKATA (86 aa)) are alpha C-terminal domain (alpha-CTD).

The protein belongs to the RNA polymerase alpha chain family. As to quaternary structure, homodimer. The RNAP catalytic core consists of 2 alpha, 1 beta, 1 beta' and 1 omega subunit. When a sigma factor is associated with the core the holoenzyme is formed, which can initiate transcription.

It catalyses the reaction RNA(n) + a ribonucleoside 5'-triphosphate = RNA(n+1) + diphosphate. Functionally, DNA-dependent RNA polymerase catalyzes the transcription of DNA into RNA using the four ribonucleoside triphosphates as substrates. The protein is DNA-directed RNA polymerase subunit alpha of Pseudomonas putida (Arthrobacter siderocapsulatus).